The chain runs to 82 residues: RNA-binding protein Hfq (82 aa).

The region spanning 9-69 (DQLLNTARKD…ISTIIPAKII (61 aa)) is the Sm domain.

Belongs to the Hfq family. Homohexamer.

Functionally, RNA chaperone that binds small regulatory RNA (sRNAs) and mRNAs to facilitate mRNA translational regulation in response to envelope stress, environmental stress and changes in metabolite concentrations. Also binds with high specificity to tRNAs. This is RNA-binding protein Hfq from Leptospira borgpetersenii serovar Hardjo-bovis (strain L550).